Here is a 380-residue protein sequence, read N- to C-terminus: MQDTLLTLDTPAAVIDLDRMQRNIARMQQRMDAQGVRLRPHVKTSKSVPVAAAQRAAGASGITVSTLKEAEQFFAAGTTDILYAVSMAPHRLPQALQLRRRGCDLKLIVDSVAAAQAIAAFGREQGEAFEVWIEIDTDGHRSGVGADDTPLLLAIGRTLHDGGMRLGGVLTHAGSSYELDTPEALQALAERERAGCVQAAEALRAAGLPCPVVSVGSTPTALAASRLDGVTEVRAGVYVFFDLVMRNIGVCAAEDVALSVLATVIGHQADKGWAIVDAGWMAMSRDRGTARQKQDFGYGQVCDLQGRVMPGFVLTGANQEHGILARADGAAEADIATRFPLGTRLRILPNHACATGAQFPAYQALAADGSVQTWERLHGW.

Lys-43 carries the post-translational modification N6-(pyridoxal phosphate)lysine.

The protein belongs to the DSD1 family. In terms of assembly, monomer. It depends on pyridoxal 5'-phosphate as a cofactor. Mn(2+) is required as a cofactor. Co(2+) serves as cofactor. Requires Ni(2+) as cofactor.

It catalyses the reaction (3R)-3-hydroxy-D-aspartate = oxaloacetate + NH4(+). With respect to regulation, strongly inhibited by hydroxylamine. Modestly inhibited by EDTA. In terms of biological role, catalyzes the deamination of D-threo-3-hydroxyaspartate (D-THA). Also exhibits dehydratase activity towards L-threo-3-hydroxyaspartate (L-THA), L-erythro-3-hydroxyaspartate (L-EHA) and D-serine. The polypeptide is D-threo-3-hydroxyaspartate dehydratase (dthadh) (Delftia sp. (strain HT23)).